Here is a 766-residue protein sequence, read N- to C-terminus: Dipeptidyl peptidase 4 (766 aa).

Residues 1–6 (MKTPWK) are Cytoplasmic-facing. A helical; Signal-anchor for type II membrane protein transmembrane segment spans residues 7–28 (VLLGLLGAAALVTIITVPVVLL). Topologically, residues 29-766 (NKGTDDATAD…HFIKQCFSLP (738 aa)) are extracellular. N-linked (GlcNAc...) asparagine glycans are attached at residues Asn-85, Asn-92, Asn-150, Asn-219, Asn-229, Asn-281, and Asn-321. 4 disulfide bridges follow: Cys-328–Cys-339, Cys-385–Cys-394, Cys-444–Cys-447, and Cys-454–Cys-472. N-linked (GlcNAc...) asparagine glycosylation is present at Asn-520. Catalysis depends on Ser-630, which acts as the Charge relay system. A disulfide bridge links Cys-649 with Cys-762. N-linked (GlcNAc...) asparagine glycosylation occurs at Asn-685. Catalysis depends on charge relay system residues Asp-708 and His-740.

The protein belongs to the peptidase S9B family. DPPIV subfamily. In terms of assembly, monomer. Homodimer. Heterodimer with Seprase (FAP). Requires homodimerization for optimal dipeptidyl peptidase activity and T-cell costimulation. Found in a membrane raft complex, at least composed of BCL10, CARD11, DPP4 and IKBKB. Associates with collagen. Interacts with PTPRC; the interaction is enhanced in an interleukin-12-dependent manner in activated lymphocytes. Interacts (via extracellular domain) with ADA; does not inhibit its dipeptidyl peptidase activity. Interacts with CAV1 (via the N-terminus); the interaction is direct. Interacts (via cytoplasmic tail) with CARD11 (via PDZ domain); its homodimerization is necessary for interaction with CARD11. Interacts with IGF2R; the interaction is direct. Interacts with GPC3. Interacts with human coronavirus-EMC spike protein and acts as a receptor for this virus. As to quaternary structure, (Microbial infection) Interacts with MERS coronavirus/MERS-CoV spike protein. The soluble form (Dipeptidyl peptidase 4 soluble form also named SDPP) derives from the membrane form (Dipeptidyl peptidase 4 membrane form also named MDPP) by proteolytic processing. In terms of processing, N- and O-Glycosylated. Post-translationally, phosphorylated. Mannose 6-phosphate residues in the carbohydrate moiety are necessary for interaction with IGF2R in activated T-cells. Mannose 6-phosphorylation is induced during T-cell activation. In terms of tissue distribution, expressed specifically in lymphatic vessels but not in blood vessels in the skin, small intestine, esophagus, ovary, breast and prostate glands. Not detected in lymphatic vessels in the lung, kidney, uterus, liver and stomach (at protein level). Expressed in the poorly differentiated crypt cells of the small intestine as well as in the mature villous cells. Expressed at very low levels in the colon.

It localises to the secreted. The protein localises to the cell membrane. Its subcellular location is the apical cell membrane. The protein resides in the cell projection. It is found in the invadopodium membrane. It localises to the lamellipodium membrane. The protein localises to the cell junction. Its subcellular location is the membrane raft. The enzyme catalyses Release of an N-terminal dipeptide, Xaa-Yaa-|-Zaa-, from a polypeptide, preferentially when Yaa is Pro, provided Zaa is neither Pro nor hydroxyproline.. Its activity is regulated as follows. Inhibited by GPC3 and diprotin A. Cell surface glycoprotein receptor involved in the costimulatory signal essential for T-cell receptor (TCR)-mediated T-cell activation. Acts as a positive regulator of T-cell coactivation, by binding at least ADA, CAV1, IGF2R, and PTPRC. Its binding to CAV1 and CARD11 induces T-cell proliferation and NF-kappa-B activation in a T-cell receptor/CD3-dependent manner. Its interaction with ADA also regulates lymphocyte-epithelial cell adhesion. In association with FAP is involved in the pericellular proteolysis of the extracellular matrix (ECM), the migration and invasion of endothelial cells into the ECM. May be involved in the promotion of lymphatic endothelial cells adhesion, migration and tube formation. When overexpressed, enhanced cell proliferation, a process inhibited by GPC3. Also acts as a serine exopeptidase with a dipeptidyl peptidase activity that regulates various physiological processes by cleaving peptides in the circulation, including many chemokines, mitogenic growth factors, neuropeptides and peptide hormones such as brain natriuretic peptide 32. Removes N-terminal dipeptides sequentially from polypeptides having unsubstituted N-termini provided that the penultimate residue is proline. Functionally, (Microbial infection) Acts as a receptor for human coronavirus MERS-CoV-2. In Homo sapiens (Human), this protein is Dipeptidyl peptidase 4.